Reading from the N-terminus, the 280-residue chain is Probable endonuclease 4 (280 aa).

Residues His69, His109, Glu145, Asp179, His182, His216, Asp229, His231, and Glu261 each coordinate Zn(2+).

It belongs to the AP endonuclease 2 family. Requires Zn(2+) as cofactor.

The enzyme catalyses Endonucleolytic cleavage to 5'-phosphooligonucleotide end-products.. Endonuclease IV plays a role in DNA repair. It cleaves phosphodiester bonds at apurinic or apyrimidinic (AP) sites, generating a 3'-hydroxyl group and a 5'-terminal sugar phosphate. The chain is Probable endonuclease 4 from Pelodictyon phaeoclathratiforme (strain DSM 5477 / BU-1).